The following is an 876-amino-acid chain: Alanine--tRNA ligase (876 aa).

Positions 568, 572, 670, and 674 each coordinate Zn(2+).

The protein belongs to the class-II aminoacyl-tRNA synthetase family. Requires Zn(2+) as cofactor.

The protein localises to the cytoplasm. The enzyme catalyses tRNA(Ala) + L-alanine + ATP = L-alanyl-tRNA(Ala) + AMP + diphosphate. In terms of biological role, catalyzes the attachment of alanine to tRNA(Ala) in a two-step reaction: alanine is first activated by ATP to form Ala-AMP and then transferred to the acceptor end of tRNA(Ala). Also edits incorrectly charged Ser-tRNA(Ala) and Gly-tRNA(Ala) via its editing domain. In Geobacter metallireducens (strain ATCC 53774 / DSM 7210 / GS-15), this protein is Alanine--tRNA ligase.